The primary structure comprises 490 residues: Pleckstrin homology domain-containing family O member 2 (490 aa).

A PH domain is found at 18–119 (MVDKAGWIKK…WIKALNEGIN (102 aa)). Phosphoserine occurs at positions 164 and 167. The disordered stretch occupies residues 173–402 (LDLDVPDSGP…DLLGEGPRHP (230 aa)). The span at 230–243 (APTPVSASSEVSPE) shows a compositional bias: low complexity. Phosphothreonine is present on T232. Phosphoserine occurs at positions 235, 237, and 238. The segment covering 244–257 (SQEDSETPAEEDSG) has biased composition (acidic residues). S273 bears the Phosphoserine mark. Residues 277-297 (PSPQEAPAAESAEPSQAPCSE) show a composition bias toward low complexity. Residues T298 and T311 each carry the phosphothreonine modification. Phosphoserine is present on residues S390 and S468. The stretch at 439-481 (SAETLLSQAVEQLRQATQVLQEMRDLGELSQEAPGLREKRKEL) forms a coiled coil.

This is Pleckstrin homology domain-containing family O member 2 (PLEKHO2) from Homo sapiens (Human).